Here is a 236-residue protein sequence, read N- to C-terminus: Translocon-associated protein subunit alpha (236 aa).

The signal sequence occupies residues 1-20 (MNKLITLLLAVLMIISCVYS). Topologically, residues 21–163 (DDVEITDDEV…TEKETSFDMD (143 aa)) are lumenal. N-linked (GlcNAc...) asparagine glycans are attached at residues asparagine 74, asparagine 94, asparagine 141, asparagine 148, and asparagine 152. The chain crosses the membrane as a helical span at residues 164-184 (SFFLILLGLGFVGGIGYIVYG). At 185-236 (KMPKQKKVRTVSKVNKNAVRVETEDETAEWLSGTSAASSKVKSVQKVVKKNK) the chain is on the cytoplasmic side.

Belongs to the TRAP-alpha family. As to quaternary structure, heterotrimer of TRAP-alpha, TRAP-beta and TRAP-gamma. In terms of processing, phosphorylated in its cytoplasmic tail.

Its subcellular location is the endoplasmic reticulum membrane. Functionally, TRAP proteins are part of a complex whose function is to bind calcium to the ER membrane and thereby regulate the retention of ER resident proteins. This is Translocon-associated protein subunit alpha (ssr1) from Dictyostelium discoideum (Social amoeba).